The primary structure comprises 228 residues: Biopolymer transport protein exbB1 (228 aa).

The next 3 helical transmembrane spans lie at 11 to 31, 116 to 136, and 158 to 178; these read LGLM…LLAE, LTLI…LGLI, and LGVA…AVAG.

This sequence belongs to the ExbB/TolQ family. As to quaternary structure, the accessory proteins ExbB and ExbD seem to form a complex with TonB.

The protein localises to the cell inner membrane. In terms of biological role, involved in the TonB-dependent energy-dependent transport of various receptor-bound substrates. Protects ExbD from proteolytic degradation and functionally stabilizes TonB. The chain is Biopolymer transport protein exbB1 (exbB1) from Vibrio cholerae serotype O1 (strain ATCC 39315 / El Tor Inaba N16961).